The chain runs to 121 residues: Large ribosomal subunit protein uL14c (121 aa).

This sequence belongs to the universal ribosomal protein uL14 family. As to quaternary structure, part of the 50S ribosomal subunit.

The protein resides in the plastid. It localises to the apicoplast. Binds to 23S rRNA. The polypeptide is Large ribosomal subunit protein uL14c (rpl14) (Toxoplasma gondii).